Consider the following 138-residue polypeptide: Large ribosomal subunit protein uL16 (138 aa).

Residues 1–15 are compositionally biased toward basic residues; sequence MLSPKKVKYRKKQRG. A disordered region spans residues 1 to 21; sequence MLSPKKVKYRKKQRGRLSGEA.

Belongs to the universal ribosomal protein uL16 family. As to quaternary structure, part of the 50S ribosomal subunit.

Functionally, binds 23S rRNA and is also seen to make contacts with the A and possibly P site tRNAs. The protein is Large ribosomal subunit protein uL16 of Borrelia garinii subsp. bavariensis (strain ATCC BAA-2496 / DSM 23469 / PBi) (Borreliella bavariensis).